A 158-amino-acid chain; its full sequence is Protein EOLA2 (158 aa).

The 87-residue stretch at 6–92 folds into the ASCH domain; sequence LSFRQPYAGF…IAGLVDIGET (87 aa).

Belongs to the EOLA family.

This Homo sapiens (Human) protein is Protein EOLA2.